Consider the following 20-residue polypeptide: Punein (20 aa).

The Barwin domain occupies 1–20 (YHYYNPEENHFCATWDASKP).

In terms of processing, the N-terminus is blocked.

The chain is Punein from Punica granatum (Pomegranate).